Consider the following 246-residue polypeptide: Small ribosomal subunit protein uS2 (246 aa).

This sequence belongs to the universal ribosomal protein uS2 family.

This is Small ribosomal subunit protein uS2 from Helicobacter acinonychis (strain Sheeba).